Consider the following 185-residue polypeptide: Ribosome-recycling factor (185 aa).

It belongs to the RRF family.

Its subcellular location is the cytoplasm. In terms of biological role, responsible for the release of ribosomes from messenger RNA at the termination of protein biosynthesis. May increase the efficiency of translation by recycling ribosomes from one round of translation to another. This chain is Ribosome-recycling factor, found in Aromatoleum aromaticum (strain DSM 19018 / LMG 30748 / EbN1) (Azoarcus sp. (strain EbN1)).